We begin with the raw amino-acid sequence, 705 residues long: Zinc finger protein 770 (705 aa).

Lys-16 is covalently cross-linked (Glycyl lysine isopeptide (Lys-Gly) (interchain with G-Cter in SUMO2)). 3 consecutive C2H2-type zinc fingers follow at residues 31-53, 59-81, and 85-107; these read YICN…YLIH, FECD…QLTH, and FSCN…QQLH. Glycyl lysine isopeptide (Lys-Gly) (interchain with G-Cter in SUMO2) cross-links involve residues Lys-116, Lys-124, and Lys-149. 3 consecutive C2H2-type zinc fingers follow at residues 164 to 186, 192 to 214, and 220 to 242; these read HACT…SLIH, FKCV…QLTH, and FQCC…KQIH. Residue Lys-266 forms a Glycyl lysine isopeptide (Lys-Gly) (interchain with G-Cter in SUMO2) linkage. The segment at 298 to 322 adopts a C2H2-type 7; degenerate zinc-finger fold; that stretch reads FQCSECEECFESEQILNGHKCLPAR. C2H2-type zinc fingers lie at residues 485–507, 513–535, 640–662, and 668–690; these read CPCD…YLIH, FDCN…KLTH, YQCS…YLIH, and FECS…QLTH. Lys-698 participates in a covalent cross-link: Glycyl lysine isopeptide (Lys-Gly) (interchain with G-Cter in SUMO2).

Belongs to the krueppel C2H2-type zinc-finger protein family.

Its subcellular location is the nucleus. Functionally, may be involved in transcriptional regulation. This Mus musculus (Mouse) protein is Zinc finger protein 770 (Znf770).